A 281-amino-acid chain; its full sequence is Large ribosomal subunit protein uL2 (281 aa).

The segment at 223–281 (VRGSVMNPVDHPHGGGEGKQPVGRKSPLTPWGKIALGVKTRKTKKSSNKLILRRRKDAK) is disordered. A compositionally biased stretch (basic residues) spans 261 to 281 (KTRKTKKSSNKLILRRRKDAK).

It belongs to the universal ribosomal protein uL2 family. In terms of assembly, part of the 50S ribosomal subunit. Forms a bridge to the 30S subunit in the 70S ribosome.

Its function is as follows. One of the primary rRNA binding proteins. Required for association of the 30S and 50S subunits to form the 70S ribosome, for tRNA binding and peptide bond formation. It has been suggested to have peptidyltransferase activity; this is somewhat controversial. Makes several contacts with the 16S rRNA in the 70S ribosome. This is Large ribosomal subunit protein uL2 from Mycoplasmopsis synoviae (strain 53) (Mycoplasma synoviae).